Here is a 203-residue protein sequence, read N- to C-terminus: Cryptic neisserial protein 1 (203 aa).

Residues 1–18 form the signal peptide; that stretch reads MRRAILLILTLTVGTSLA.

This sequence belongs to the Cnp family.

It localises to the periplasm. The protein localises to the cytoplasm. In Neisseria gonorrhoeae (strain ATCC 700825 / FA 1090), this protein is Cryptic neisserial protein 1.